Consider the following 135-residue polypeptide: Retinol-binding protein 5 (135 aa).

This sequence belongs to the calycin superfamily. Fatty-acid binding protein (FABP) family.

Its subcellular location is the cytoplasm. Functionally, intracellular transport of retinol. The polypeptide is Retinol-binding protein 5 (RBP5) (Pongo abelii (Sumatran orangutan)).